A 372-amino-acid polypeptide reads, in one-letter code: Transcription factor MYB80 (372 aa).

2 HTH myb-type domains span residues 9–65 (KDNV…RPDL) and 66–116 (KHGE…KKKL). DNA-binding regions (H-T-H motif) lie at residues 37 to 61 (WRLI…TNYL) and 89 to 112 (WSVI…NTKL). A compositionally biased stretch (polar residues) spans 298-311 (MWSHQSLYSGSSGT). Residues 298-347 (MWSHQSLYSGSSGTEEARRELPEKGNDSVGSSGGDDDAADDGKDSGKGAA) are disordered. The segment covering 312–323 (EEARRELPEKGN) has biased composition (basic and acidic residues).

Its subcellular location is the nucleus. Essential for tapetum development in anthers and microsporogenesis. May regulate the timing of tapetal programmed cell death (PCD) which is critical for pollen development. The protein is Transcription factor MYB80 of Oryza sativa subsp. japonica (Rice).